The following is a 647-amino-acid chain: Threonine--tRNA ligase (647 aa).

Residues 1–61 enclose the TGS domain; it reads MINITFPDGA…TEDGSIEIVT (61 aa). The interval 242-540 is catalytic; it reads DHRKLGKELD…LIENYKGAFP (299 aa). Zn(2+) is bound by residues cysteine 336, histidine 387, and histidine 517.

This sequence belongs to the class-II aminoacyl-tRNA synthetase family. Homodimer. Zn(2+) is required as a cofactor.

The protein resides in the cytoplasm. The enzyme catalyses tRNA(Thr) + L-threonine + ATP = L-threonyl-tRNA(Thr) + AMP + diphosphate + H(+). Its function is as follows. Catalyzes the attachment of threonine to tRNA(Thr) in a two-step reaction: L-threonine is first activated by ATP to form Thr-AMP and then transferred to the acceptor end of tRNA(Thr). Also edits incorrectly charged L-seryl-tRNA(Thr). This Streptococcus pneumoniae serotype 4 (strain ATCC BAA-334 / TIGR4) protein is Threonine--tRNA ligase.